The sequence spans 152 residues: S-ribosylhomocysteine lyase (152 aa).

3 residues coordinate Fe cation: His-53, His-57, and Cys-120.

It belongs to the LuxS family. In terms of assembly, homodimer. The cofactor is Fe cation.

It catalyses the reaction S-(5-deoxy-D-ribos-5-yl)-L-homocysteine = (S)-4,5-dihydroxypentane-2,3-dione + L-homocysteine. Involved in the synthesis of autoinducer 2 (AI-2) which is secreted by bacteria and is used to communicate both the cell density and the metabolic potential of the environment. The regulation of gene expression in response to changes in cell density is called quorum sensing. Catalyzes the transformation of S-ribosylhomocysteine (RHC) to homocysteine (HC) and 4,5-dihydroxy-2,3-pentadione (DPD). The protein is S-ribosylhomocysteine lyase of Enterococcus faecalis (strain ATCC 700802 / V583).